Consider the following 362-residue polypeptide: tRNA/tmRNA (uracil-C(5))-methyltransferase (362 aa).

S-adenosyl-L-methionine is bound by residues Gln182, Tyr210, Asn215, Glu231, and Asp293. The active-site Nucleophile is Cys318. The active-site Proton acceptor is Glu352.

It belongs to the class I-like SAM-binding methyltransferase superfamily. RNA M5U methyltransferase family. TrmA subfamily.

It carries out the reaction uridine(54) in tRNA + S-adenosyl-L-methionine = 5-methyluridine(54) in tRNA + S-adenosyl-L-homocysteine + H(+). The catalysed reaction is uridine(341) in tmRNA + S-adenosyl-L-methionine = 5-methyluridine(341) in tmRNA + S-adenosyl-L-homocysteine + H(+). Its function is as follows. Dual-specificity methyltransferase that catalyzes the formation of 5-methyluridine at position 54 (m5U54) in all tRNAs, and that of position 341 (m5U341) in tmRNA (transfer-mRNA). In Neisseria meningitidis serogroup B (strain ATCC BAA-335 / MC58), this protein is tRNA/tmRNA (uracil-C(5))-methyltransferase.